Reading from the N-terminus, the 56-residue chain is EEGLDFPEYDGVDRVVNVNAKNYKNVFKKYEVLALLYHEPPXXDKASQRQFDMEEL.

Phosphotyrosine is present on Tyr-9. Ser-47 carries the phosphoserine modification.

Belongs to the calsequestrin family. As to quaternary structure, monomer; increases in response to a depletion of intracellular calcium. Homodimer. Homotetramer and homopolymer. Can form linear homooligomers. Ca(2+) ions promote oligomerization. Interacts (via C-terminal end and preferentially with the monomeric form) with STIM1; this interaction increases in response to a depletion of intracellular calcium, decreases both STIM1 aggregation and clustering, interaction of STIM1 with ORAI1 and store-operated Ca(2+) entry (SOCE) activity. Interacts with ASPH and TRDN. N-glycosylated.

The protein localises to the endoplasmic reticulum. It localises to the sarcoplasmic reticulum. It is found in the sarcoplasmic reticulum lumen. Its subcellular location is the sarcoplasmic reticulum membrane. The protein resides in the mitochondrion matrix. Its function is as follows. Calsequestrin is a high-capacity, moderate affinity, calcium-binding protein and thus acts as an internal calcium store in muscle. Calcium ions are bound by clusters of acidic residues at the protein surface, often at the interface between subunits. Can bind around 80 Ca(2+) ions. Regulates the release of lumenal Ca(2+) via the calcium release channel RYR1; this plays an important role in triggering muscle contraction. Negatively regulates store-operated Ca(2+) entry (SOCE) activity. The chain is Calsequestrin-1 (CASQ1) from Canis lupus familiaris (Dog).